The sequence spans 425 residues: Glucose-6-phosphate 1-dehydrogenase (425 aa).

The NADP(+) site is built by arginine 44 and lysine 135. Residues histidine 165, lysine 169, glutamate 201, and aspartate 220 each contribute to the substrate site. Histidine 225 acts as the Proton acceptor in catalysis. Lysine 311 contributes to the substrate binding site.

This sequence belongs to the glucose-6-phosphate dehydrogenase family.

The enzyme catalyses D-glucose 6-phosphate + NADP(+) = 6-phospho-D-glucono-1,5-lactone + NADPH + H(+). It functions in the pathway carbohydrate degradation; pentose phosphate pathway; D-ribulose 5-phosphate from D-glucose 6-phosphate (oxidative stage): step 1/3. Catalyzes the oxidation of glucose 6-phosphate to 6-phosphogluconolactone. This chain is Glucose-6-phosphate 1-dehydrogenase, found in Helicobacter pylori (strain J99 / ATCC 700824) (Campylobacter pylori J99).